The primary structure comprises 570 residues: Pre-mRNA 3'-end-processing factor FIP1 (570 aa).

Residues 1–10 show a composition bias toward basic and acidic residues; sequence MSAEEADKTT. Positions 1 to 107 are disordered; that stretch reads MSAEEADKTT…SDDDDDDVRV (107 aa). Residues 16 to 38 show a composition bias toward acidic residues; sequence AGDEEEEWLYGDEGESKETEEEE. Positions 56–77 are enriched in low complexity; it reads DAPTTTNNSSDSATPPTTTTTT. Over residues 87–104 the composition is skewed to acidic residues; that stretch reads APGEDEDSESDSDDDDDD. Thr125 bears the Phosphothreonine mark. Ser247 carries the phosphoserine modification. Disordered stretches follow at residues 300–328, 371–400, and 418–570; these read RRRHNLEGNNIQVISEHSSSEVEPEVQKM, PNFPPPTGGPPPSLIPTLDNSGHPGGYDGR, and GAVN…EAME. Residues 371–384 show a composition bias toward pro residues; sequence PNFPPPTGGPPPSL. Composition is skewed to basic and acidic residues over residues 436–462 and 476–506; these read YPRRDKEREKERERERQRDRGHERDHS and DEERYRSYRDYGDRGYERHRERASREKEERH. Composition is skewed to basic residues over residues 520–529 and 538–548; these read KSSRSSSRRR and HRRHKHKKSKR. Positions 549 to 562 are enriched in basic and acidic residues; it reads SKEGKEPSEERSAD.

It belongs to the FIP1 family.

It localises to the nucleus. Involved in mRNA processing. The sequence is that of Pre-mRNA 3'-end-processing factor FIP1 (fip1l1) from Danio rerio (Zebrafish).